The following is a 590-amino-acid chain: Aspartate--tRNA(Asp/Asn) ligase (590 aa).

Glutamate 175 provides a ligand contact to L-aspartate. The aspartate stretch occupies residues 199–202; the sequence is QQYK. Residues arginine 221 and histidine 450 each contribute to the L-aspartate site. An ATP-binding site is contributed by 221–223; it reads RDE. Glutamate 484 contributes to the ATP binding site. Arginine 491 contributes to the L-aspartate binding site. 536–539 contributes to the ATP binding site; that stretch reads GVDR.

The protein belongs to the class-II aminoacyl-tRNA synthetase family. Type 1 subfamily. In terms of assembly, homodimer.

Its subcellular location is the cytoplasm. It carries out the reaction tRNA(Asx) + L-aspartate + ATP = L-aspartyl-tRNA(Asx) + AMP + diphosphate. Functionally, aspartyl-tRNA synthetase with relaxed tRNA specificity since it is able to aspartylate not only its cognate tRNA(Asp) but also tRNA(Asn). Reaction proceeds in two steps: L-aspartate is first activated by ATP to form Asp-AMP and then transferred to the acceptor end of tRNA(Asp/Asn). The sequence is that of Aspartate--tRNA(Asp/Asn) ligase from Bradyrhizobium sp. (strain ORS 278).